Here is a 315-residue protein sequence, read N- to C-terminus: Ribose-phosphate pyrophosphokinase (315 aa).

Residues 37 to 39 (DGE) and 96 to 97 (RQ) each bind ATP. Histidine 131 and aspartate 170 together coordinate Mg(2+). The active site involves lysine 194. Residues arginine 196, aspartate 220, and 224–228 (DTGGT) contribute to the D-ribose 5-phosphate site.

Belongs to the ribose-phosphate pyrophosphokinase family. Class I subfamily. Homohexamer. Requires Mg(2+) as cofactor.

The protein resides in the cytoplasm. It carries out the reaction D-ribose 5-phosphate + ATP = 5-phospho-alpha-D-ribose 1-diphosphate + AMP + H(+). It functions in the pathway metabolic intermediate biosynthesis; 5-phospho-alpha-D-ribose 1-diphosphate biosynthesis; 5-phospho-alpha-D-ribose 1-diphosphate from D-ribose 5-phosphate (route I): step 1/1. Involved in the biosynthesis of the central metabolite phospho-alpha-D-ribosyl-1-pyrophosphate (PRPP) via the transfer of pyrophosphoryl group from ATP to 1-hydroxyl of ribose-5-phosphate (Rib-5-P). This chain is Ribose-phosphate pyrophosphokinase, found in Salmonella typhi.